A 201-amino-acid polypeptide reads, in one-letter code: Large ribosomal subunit protein uL4 (201 aa).

Residues 42 to 67 (GNSAQKTRSEVSGGGKKPWNQKGTGR) form a disordered region.

Belongs to the universal ribosomal protein uL4 family. Part of the 50S ribosomal subunit.

One of the primary rRNA binding proteins, this protein initially binds near the 5'-end of the 23S rRNA. It is important during the early stages of 50S assembly. It makes multiple contacts with different domains of the 23S rRNA in the assembled 50S subunit and ribosome. Functionally, forms part of the polypeptide exit tunnel. This Legionella pneumophila (strain Corby) protein is Large ribosomal subunit protein uL4.